A 374-amino-acid polypeptide reads, in one-letter code: Speckle-type POZ protein (374 aa).

Residues 31 to 161 (KFSYMWTINN…DDKLTLFCEV (131 aa)) enclose the MATH domain. The required for nuclear localization stretch occupies residues 71–191 (VNPKGLDEES…PDCRLADELG (121 aa)). One can recognise a BTB domain in the interval 173-297 (QNTMNMVKVP…MCEDALCTSL (125 aa)). Residues 297 to 355 (LSVENAAEILILADLHSADQLKTQAVDFINYHASDVMETSGWKSMVASHPHLVAEAYRS) are homodimerization.

It belongs to the Tdpoz family. In terms of assembly, homodimer. Part of cullin-RING-based BCR (BTB-CUL3-RBX1) E3 ubiquitin-protein ligase complexes that contain CUL3 and SPOP, plus a target protein.

It localises to the nucleus. It is found in the nucleus speckle. Its pathway is protein modification; protein ubiquitination. In terms of biological role, component of a cullin-RING-based BCR (BTB-CUL3-RBX1) E3 ubiquitin-protein ligase complex that mediates the ubiquitination of target proteins, leading most often to their proteasomal degradation. In Danio rerio (Zebrafish), this protein is Speckle-type POZ protein (spop).